The primary structure comprises 126 residues: Protein ApaG (126 aa).

The ApaG domain occupies 2-126; that stretch reads DISTPCIKCQ…FRLAIPNILN (125 aa).

This Vibrio atlanticus (strain LGP32) (Vibrio splendidus (strain Mel32)) protein is Protein ApaG.